The primary structure comprises 272 residues: Alcohol dehydrogenase-related 31 kDa protein (272 aa).

11 to 34 (YVADCGGIALETSKVLMTKNIAKL) contacts NAD(+). Ser-139 is a binding site for substrate. Residue Tyr-152 is the Proton acceptor of the active site.

The protein belongs to the short-chain dehydrogenases/reductases (SDR) family.

The protein is Alcohol dehydrogenase-related 31 kDa protein (Adhr) of Drosophila melanogaster (Fruit fly).